We begin with the raw amino-acid sequence, 152 residues long: Urease accessory protein UreE (152 aa).

Belongs to the UreE family.

Its subcellular location is the cytoplasm. In terms of biological role, involved in urease metallocenter assembly. Binds nickel. Probably functions as a nickel donor during metallocenter assembly. This Enterobacter sp. (strain 638) protein is Urease accessory protein UreE.